Reading from the N-terminus, the 330-residue chain is MALSGSTPAPSWEEDECLDYYGMLSLHRMFEVVGGQLTECELELLAFLLDEAPGAPGGLARARSGLELLLELERRGQCDESNLRLLSQLLRVLARHDLLPHLARKRRRPVSPERYSYGNPSSSSKRTEDSCRRRRQASSSSDSPQSQWDTGSPPTKRQRRSRGRPSSGARQRRRAGLAASQQHQQHQELGRPSSEGKVTCDIRLRVRAEYCEHGPALEQGVASRRPQALARQLDVFGQATAVLRSRDLGSVVCDIKFSELSYLDAFWGDYLSGALLQALRGVFLTEALREAVGREAVRLLVSVDEADYEAGRRRLLLMEEEGGRRGTEAS.

In terms of domain architecture, DED spans 25–104 (SLHRMFEVVG…RHDLLPHLAR (80 aa)). The short motif at 104–109 (RKRRRP) is the Nuclear localization signal element. Residues 104–195 (RKRRRPVSPE…HQELGRPSSE (92 aa)) form a disordered region. Positions 137-147 (ASSSSDSPQSQ) are enriched in low complexity. The short motif at 156–174 (KRQRRSRGRPSSGARQRRR) is the Bipartite nuclear localization signal element.

As to quaternary structure, interacts with CASP8, CASP10 and GTF3C3. Homodimerizes and heterodimerizes with DEDD. As to expression, expression is high in liver, heart, kidney, and testis but low in brain, spleen, lung, and skeleton muscle.

It localises to the nucleus. Its subcellular location is the nucleolus. In terms of biological role, may play a critical role in death receptor-induced apoptosis and may target CASP8 and CASP10 to the nucleus. May regulate degradation of intermediate filaments during apoptosis. May play a role in the general transcription machinery in the nucleus and might be an important regulator of the activity of GTF3C3. This Mus musculus (Mouse) protein is DNA-binding death effector domain-containing protein 2 (Dedd2).